A 357-amino-acid chain; its full sequence is Geranylgeranyl pyrophosphate synthase 11, chloroplastic (357 aa).

The N-terminal 37 residues, 1–37 (MATTLSSSSLFIQFRGRRYNSLSSFNNLQKRTVLSLS), are a transit peptide targeting the chloroplast. The isopentenyl diphosphate site is built by K103, R106, and H135. 2 residues coordinate Mg(2+): D142 and D148. Position 153 (R153) interacts with dimethylallyl diphosphate. An isopentenyl diphosphate-binding site is contributed by R154. Residues K242, T243, Q280, K297, and K307 each coordinate dimethylallyl diphosphate.

It belongs to the FPP/GGPP synthase family. In terms of assembly, monomer. The cofactor is Mg(2+).

It localises to the plastid. The protein resides in the chloroplast. It catalyses the reaction isopentenyl diphosphate + dimethylallyl diphosphate = (2E)-geranyl diphosphate + diphosphate. The enzyme catalyses isopentenyl diphosphate + (2E)-geranyl diphosphate = (2E,6E)-farnesyl diphosphate + diphosphate. It carries out the reaction isopentenyl diphosphate + (2E,6E)-farnesyl diphosphate = (2E,6E,10E)-geranylgeranyl diphosphate + diphosphate. Its pathway is isoprenoid biosynthesis; farnesyl diphosphate biosynthesis; farnesyl diphosphate from geranyl diphosphate and isopentenyl diphosphate: step 1/1. It functions in the pathway isoprenoid biosynthesis; geranyl diphosphate biosynthesis; geranyl diphosphate from dimethylallyl diphosphate and isopentenyl diphosphate: step 1/1. It participates in isoprenoid biosynthesis; geranylgeranyl diphosphate biosynthesis; geranylgeranyl diphosphate from farnesyl diphosphate and isopentenyl diphosphate: step 1/1. In terms of biological role, catalyzes the trans-addition of the three molecules of IPP onto DMAPP to form geranylgeranyl pyrophosphate. The sequence is that of Geranylgeranyl pyrophosphate synthase 11, chloroplastic from Arabidopsis thaliana (Mouse-ear cress).